We begin with the raw amino-acid sequence, 452 residues long: Bifunctional protein GlmU (452 aa).

The segment at 1–226 (MVAVAILAAG…SQEILGINDR (226 aa)) is pyrophosphorylase. UDP-N-acetyl-alpha-D-glucosamine-binding positions include 7–10 (LAAG), K21, Q73, and 78–79 (GT). D103 serves as a coordination point for Mg(2+). UDP-N-acetyl-alpha-D-glucosamine contacts are provided by G140, E155, N170, and N224. N224 contacts Mg(2+). The segment at 227–247 (LQLADSFRILQERIRQQWMLA) is linker. Residues 248–452 (GVTLVDPTSI…ENWSTPTTEQ (205 aa)) form an N-acetyltransferase region. The UDP-N-acetyl-alpha-D-glucosamine site is built by R329 and K347. The active-site Proton acceptor is the H359. The UDP-N-acetyl-alpha-D-glucosamine site is built by Y362 and N373. Acetyl-CoA contacts are provided by residues A376, 382-383 (NY), A419, and R436.

This sequence in the N-terminal section; belongs to the N-acetylglucosamine-1-phosphate uridyltransferase family. The protein in the C-terminal section; belongs to the transferase hexapeptide repeat family. In terms of assembly, homotrimer. It depends on Mg(2+) as a cofactor.

The protein resides in the cytoplasm. The catalysed reaction is alpha-D-glucosamine 1-phosphate + acetyl-CoA = N-acetyl-alpha-D-glucosamine 1-phosphate + CoA + H(+). It catalyses the reaction N-acetyl-alpha-D-glucosamine 1-phosphate + UTP + H(+) = UDP-N-acetyl-alpha-D-glucosamine + diphosphate. It functions in the pathway nucleotide-sugar biosynthesis; UDP-N-acetyl-alpha-D-glucosamine biosynthesis; N-acetyl-alpha-D-glucosamine 1-phosphate from alpha-D-glucosamine 6-phosphate (route II): step 2/2. It participates in nucleotide-sugar biosynthesis; UDP-N-acetyl-alpha-D-glucosamine biosynthesis; UDP-N-acetyl-alpha-D-glucosamine from N-acetyl-alpha-D-glucosamine 1-phosphate: step 1/1. Its pathway is bacterial outer membrane biogenesis; LPS lipid A biosynthesis. Catalyzes the last two sequential reactions in the de novo biosynthetic pathway for UDP-N-acetylglucosamine (UDP-GlcNAc). The C-terminal domain catalyzes the transfer of acetyl group from acetyl coenzyme A to glucosamine-1-phosphate (GlcN-1-P) to produce N-acetylglucosamine-1-phosphate (GlcNAc-1-P), which is converted into UDP-GlcNAc by the transfer of uridine 5-monophosphate (from uridine 5-triphosphate), a reaction catalyzed by the N-terminal domain. The chain is Bifunctional protein GlmU from Synechococcus sp. (strain ATCC 27144 / PCC 6301 / SAUG 1402/1) (Anacystis nidulans).